The sequence spans 133 residues: MPDSSTALRILVYSDNVQTRERVMRALGKRLHPDLPDLTYVEVATGPMVIRQMDRGGIDLAILDGEATPTGGMGIAKQLKDELASCPPILVLTGRPDDTWLASWSRAEAAVPHPVDPIVLGRTVLSLLRAPAH.

Residues 9–128 (RILVYSDNVQ…VLGRTVLSLL (120 aa)) enclose the Response regulatory domain. Asp64 bears the 4-aspartylphosphate mark.

This is an uncharacterized protein from Mycobacterium tuberculosis (strain CDC 1551 / Oshkosh).